The primary structure comprises 516 residues: Probable inactive beta-glucosidase 14 (516 aa).

The first 23 residues, 1–23, serve as a signal peptide directing secretion; sequence MAAAWLVVLLTVHRLLHLSGVSA. Residues Gln-43, His-145, and 190 to 191 each bind a beta-D-glucoside; that span reads NQ. A glycan (N-linked (GlcNAc...) asparagine) is linked at Asn-193. Cys-210 and Cys-217 form a disulfide bridge. N-linked (GlcNAc...) asparagine glycosylation is found at Asn-221 and Asn-270. Tyr-334 contributes to the a beta-D-glucoside binding site. A disulfide bridge links Cys-342 with Cys-347. Glu-405 lines the a beta-D-glucoside pocket. Glu-405 functions as the Nucleophile in the catalytic mechanism. 2 N-linked (GlcNAc...) asparagine glycosylation sites follow: Asn-415 and Asn-423. A beta-D-glucoside-binding positions include Trp-454, 461 to 462, and Phe-470; that span reads EW.

It belongs to the glycosyl hydrolase 1 family. As to expression, expressed in flowers and endosperm.

The sequence is that of Probable inactive beta-glucosidase 14 from Oryza sativa subsp. japonica (Rice).